The primary structure comprises 428 residues: UPF0229 protein YeaH (428 aa).

Basic and acidic residues predominate over residues 78–90 (GNDHFIQNDRIER). Residues 78–111 (GNDHFIQNDRIERPQGGGGGGSGSGQGQASQDGE) form a disordered region. Gly residues predominate over residues 92–103 (QGGGGGGSGSGQ).

The protein belongs to the UPF0229 family.

The polypeptide is UPF0229 protein YeaH (Salmonella choleraesuis (strain SC-B67)).